We begin with the raw amino-acid sequence, 109 residues long: Mitochondrial pyruvate carrier 1 (109 aa).

Ala2 carries the post-translational modification N-acetylalanine. Residues 2 to 20 lie on the Mitochondrial matrix side of the membrane; the sequence is AGALVRKAADYVRSKDFRD. A helical membrane pass occupies residues 21–41; that stretch reads YLMSTHFWGPVANWGLPIAAI. At 42-52 the chain is on the mitochondrial intermembrane side; that stretch reads NDMKKSPEIIS. The chain crosses the membrane as a helical span at residues 53–71; the sequence is GRMTFALCCYSLTFMRFAY. Residue Lys72 is modified to N6-acetyllysine. The Mitochondrial matrix portion of the chain corresponds to 72–109; the sequence is KVQPRNWLLFACHATNEVAQLIQGGRLIKHEMTKTASA.

Belongs to the mitochondrial pyruvate carrier (MPC) (TC 2.A.105) family. As to quaternary structure, homodimer. Forms heterodimer with MPC2. The heterodimer is the more stable and dominant form.

The protein resides in the mitochondrion inner membrane. It catalyses the reaction pyruvate(out) + H(+)(out) = pyruvate(in) + H(+)(in). Its function is as follows. Mediates the uptake of pyruvate into mitochondria. The polypeptide is Mitochondrial pyruvate carrier 1 (MPC1) (Homo sapiens (Human)).